Here is a 176-residue protein sequence, read N- to C-terminus: ATP synthase subunit b (176 aa).

A helical transmembrane segment spans residues 18–38 (GVEWGTVIVTVITFAILLALL).

It belongs to the ATPase B chain family. In terms of assembly, F-type ATPases have 2 components, F(1) - the catalytic core - and F(0) - the membrane proton channel. F(1) has five subunits: alpha(3), beta(3), gamma(1), delta(1), epsilon(1). F(0) has three main subunits: a(1), b(2) and c(10-14). The alpha and beta chains form an alternating ring which encloses part of the gamma chain. F(1) is attached to F(0) by a central stalk formed by the gamma and epsilon chains, while a peripheral stalk is formed by the delta and b chains.

Its subcellular location is the cell membrane. Its function is as follows. F(1)F(0) ATP synthase produces ATP from ADP in the presence of a proton or sodium gradient. F-type ATPases consist of two structural domains, F(1) containing the extramembraneous catalytic core and F(0) containing the membrane proton channel, linked together by a central stalk and a peripheral stalk. During catalysis, ATP synthesis in the catalytic domain of F(1) is coupled via a rotary mechanism of the central stalk subunits to proton translocation. In terms of biological role, component of the F(0) channel, it forms part of the peripheral stalk, linking F(1) to F(0). The polypeptide is ATP synthase subunit b (Staphylococcus haemolyticus (strain JCSC1435)).